We begin with the raw amino-acid sequence, 464 residues long: Asparagine--tRNA ligase (464 aa).

Belongs to the class-II aminoacyl-tRNA synthetase family. Homodimer.

It localises to the cytoplasm. It carries out the reaction tRNA(Asn) + L-asparagine + ATP = L-asparaginyl-tRNA(Asn) + AMP + diphosphate + H(+). This Azobacteroides pseudotrichonymphae genomovar. CFP2 protein is Asparagine--tRNA ligase.